We begin with the raw amino-acid sequence, 437 residues long: Adenosylmethionine-8-amino-7-oxononanoate aminotransferase (437 aa).

Residue W64 participates in substrate binding. Residue 124–125 (GS) coordinates pyridoxal 5'-phosphate. Y157 is a substrate binding site. D254 is a pyridoxal 5'-phosphate binding site. Residues K283 and G316 each contribute to the substrate site. K283 bears the N6-(pyridoxal phosphate)lysine mark. 317-318 (PT) serves as a coordination point for pyridoxal 5'-phosphate. R400 is a substrate binding site.

Belongs to the class-III pyridoxal-phosphate-dependent aminotransferase family. BioA subfamily. In terms of assembly, homodimer. The cofactor is pyridoxal 5'-phosphate.

It localises to the cytoplasm. The catalysed reaction is (8S)-8-amino-7-oxononanoate + S-adenosyl-L-methionine = S-adenosyl-4-methylsulfanyl-2-oxobutanoate + (7R,8S)-7,8-diammoniononanoate. It functions in the pathway cofactor biosynthesis; biotin biosynthesis; 7,8-diaminononanoate from 8-amino-7-oxononanoate (SAM route): step 1/1. Its function is as follows. Catalyzes the transfer of the alpha-amino group from S-adenosyl-L-methionine (SAM) to 7-keto-8-aminopelargonic acid (KAPA) to form 7,8-diaminopelargonic acid (DAPA). It is the only aminotransferase known to utilize SAM as an amino donor. The chain is Adenosylmethionine-8-amino-7-oxononanoate aminotransferase (bioA) from Mycobacterium tuberculosis (strain CDC 1551 / Oshkosh).